A 171-amino-acid polypeptide reads, in one-letter code: Skp-like protein (171 aa).

Positions 1–21 (MKKLLFSTFLLVLGSTSAAHA) are cleaved as a signal peptide.

This sequence belongs to the Skp family.

The protein is Skp-like protein of Chlamydia pneumoniae (Chlamydophila pneumoniae).